We begin with the raw amino-acid sequence, 416 residues long: Elongation factor 1-gamma 3 (416 aa).

The GST N-terminal domain maps to 1–82 (MALVLHCGSG…YVARLKDNSS (82 aa)). Residues 87 to 215 (SLIDYSHIEQ…FKQAESVPPV (129 aa)) form the GST C-terminal domain. A disordered region spans residues 213-263 (PPVQKKAAPPKESKAKEAKKEAPKEAPKPKVEASEEEEAPKPKPKNPLDLL). Residues 221 to 245 (PPKESKAKEAKKEAPKEAPKPKVEA) are compositionally biased toward basic and acidic residues. The 161-residue stretch at 256 to 416 (PKNPLDLLPP…EDLLDAKCFK (161 aa)) folds into the EF-1-gamma C-terminal domain.

As to quaternary structure, EF-1 is composed of four subunits: alpha, beta, delta, and gamma.

Probably plays a role in anchoring the complex to other cellular components. This Oryza sativa subsp. japonica (Rice) protein is Elongation factor 1-gamma 3.